The following is a 362-amino-acid chain: MQTLHVELGDRRYPIFIGSQLNPQNLLAPYIKGRQVMIVTNTTLEQLYLQHYQDALHALDKQVAVCVLPDGEKYKNIEHLNLIFDALLKAGFNRDCTVLALGGGVIGDMAGFAAASFQRGVYFVQIPTTLLSQVDSSVGGKTGINHPLGKNMIGAFKQPEVVMADMSQLKTLPPRELSAGLAEVIKYALLGDIEFLGWLETHMDGLIAGDETLLAEAVYRSCAHKARIVANDEKEQGERALLNLGHTFGHAIESYLGYGEWLHGEAVATGMVMAADLSHRLGWISSGDLERTKKIIQRANLPISCPPIPLDEFLSYMSHDKKVLNGQLRLVLLQQLGQAIITKTFDVEMMKAAILANQASHT.

NAD(+)-binding positions include 70–75 (DGEKYK), 104–108 (GVIGD), 128–129 (TT), Lys-141, and Lys-150. The Zn(2+) site is built by Glu-183, His-246, and His-263.

This sequence belongs to the sugar phosphate cyclases superfamily. Dehydroquinate synthase family. Requires Co(2+) as cofactor. The cofactor is Zn(2+). NAD(+) serves as cofactor.

It is found in the cytoplasm. It carries out the reaction 7-phospho-2-dehydro-3-deoxy-D-arabino-heptonate = 3-dehydroquinate + phosphate. The protein operates within metabolic intermediate biosynthesis; chorismate biosynthesis; chorismate from D-erythrose 4-phosphate and phosphoenolpyruvate: step 2/7. Functionally, catalyzes the conversion of 3-deoxy-D-arabino-heptulosonate 7-phosphate (DAHP) to dehydroquinate (DHQ). This Acinetobacter baylyi (strain ATCC 33305 / BD413 / ADP1) protein is 3-dehydroquinate synthase.